The primary structure comprises 61 residues: Small ribosomal subunit protein uS14 (61 aa).

Cys-24, Cys-27, Cys-40, and Cys-43 together coordinate Zn(2+).

This sequence belongs to the universal ribosomal protein uS14 family. Zinc-binding uS14 subfamily. Part of the 30S ribosomal subunit. Contacts proteins S3 and S10. It depends on Zn(2+) as a cofactor.

Functionally, binds 16S rRNA, required for the assembly of 30S particles and may also be responsible for determining the conformation of the 16S rRNA at the A site. The protein is Small ribosomal subunit protein uS14 of Streptococcus thermophilus (strain ATCC BAA-491 / LMD-9).